The following is a 424-amino-acid chain: UDP-N-acetylglucosamine 1-carboxyvinyltransferase (424 aa).

A phosphoenolpyruvate-binding site is contributed by 22–23 (KN). Residue Arg98 participates in UDP-N-acetyl-alpha-D-glucosamine binding. Cys122 serves as the catalytic Proton donor. A 2-(S-cysteinyl)pyruvic acid O-phosphothioketal modification is found at Cys122. UDP-N-acetyl-alpha-D-glucosamine is bound by residues 127 to 131 (RPVDQ), Asp312, and Ile334.

This sequence belongs to the EPSP synthase family. MurA subfamily.

The protein resides in the cytoplasm. The enzyme catalyses phosphoenolpyruvate + UDP-N-acetyl-alpha-D-glucosamine = UDP-N-acetyl-3-O-(1-carboxyvinyl)-alpha-D-glucosamine + phosphate. It participates in cell wall biogenesis; peptidoglycan biosynthesis. Cell wall formation. Adds enolpyruvyl to UDP-N-acetylglucosamine. The protein is UDP-N-acetylglucosamine 1-carboxyvinyltransferase of Xanthomonas campestris pv. campestris (strain B100).